The primary structure comprises 78 residues: Large ribosomal subunit protein bL28 (78 aa).

The segment at 1–21 is disordered; the sequence is MSRVCQVTGKRPMVGNNRSHA.

The protein belongs to the bacterial ribosomal protein bL28 family.

The protein is Large ribosomal subunit protein bL28 of Shewanella halifaxensis (strain HAW-EB4).